A 246-amino-acid chain; its full sequence is 1-(5-phosphoribosyl)-5-[(5-phosphoribosylamino)methylideneamino] imidazole-4-carboxamide isomerase (246 aa).

Asp10 acts as the Proton acceptor in catalysis. Residue Asp135 is the Proton donor of the active site.

Belongs to the HisA/HisF family.

It localises to the cytoplasm. It catalyses the reaction 1-(5-phospho-beta-D-ribosyl)-5-[(5-phospho-beta-D-ribosylamino)methylideneamino]imidazole-4-carboxamide = 5-[(5-phospho-1-deoxy-D-ribulos-1-ylimino)methylamino]-1-(5-phospho-beta-D-ribosyl)imidazole-4-carboxamide. Its pathway is amino-acid biosynthesis; L-histidine biosynthesis; L-histidine from 5-phospho-alpha-D-ribose 1-diphosphate: step 4/9. This Methanosarcina mazei (strain ATCC BAA-159 / DSM 3647 / Goe1 / Go1 / JCM 11833 / OCM 88) (Methanosarcina frisia) protein is 1-(5-phosphoribosyl)-5-[(5-phosphoribosylamino)methylideneamino] imidazole-4-carboxamide isomerase.